The sequence spans 350 residues: 2-oxoisovalerate dehydrogenase subunit beta (350 aa).

Heterodimer of an alpha and a beta chain. Thiamine diphosphate is required as a cofactor.

It carries out the reaction N(6)-[(R)-lipoyl]-L-lysyl-[protein] + 3-methyl-2-oxobutanoate + H(+) = N(6)-[(R)-S(8)-2-methylpropanoyldihydrolipoyl]-L-lysyl-[protein] + CO2. Its function is as follows. The branched-chain alpha-keto dehydrogenase complex catalyzes the overall conversion of alpha-keto acids to acyl-CoA and CO(2). It contains multiple copies of three enzymatic components: branched-chain alpha-keto acid decarboxylase (E1), lipoamide acyltransferase (E2) and lipoamide dehydrogenase (E3). In Pseudomonas aeruginosa (strain ATCC 15692 / DSM 22644 / CIP 104116 / JCM 14847 / LMG 12228 / 1C / PRS 101 / PAO1), this protein is 2-oxoisovalerate dehydrogenase subunit beta (bkdA2).